Here is a 279-residue protein sequence, read N- to C-terminus: Release factor glutamine methyltransferase (279 aa).

The S-adenosyl-L-methionine site is built by D139 and N182. 182 to 185 (NPPY) provides a ligand contact to substrate.

The protein belongs to the protein N5-glutamine methyltransferase family. PrmC subfamily.

It catalyses the reaction L-glutaminyl-[peptide chain release factor] + S-adenosyl-L-methionine = N(5)-methyl-L-glutaminyl-[peptide chain release factor] + S-adenosyl-L-homocysteine + H(+). In terms of biological role, methylates the class 1 translation termination release factors RF1/PrfA and RF2/PrfB on the glutamine residue of the universally conserved GGQ motif. The polypeptide is Release factor glutamine methyltransferase (Thermodesulfovibrio yellowstonii (strain ATCC 51303 / DSM 11347 / YP87)).